Reading from the N-terminus, the 538-residue chain is Beta-1,4-mannosyl-glycoprotein 4-beta-N-acetylglucosaminyltransferase (538 aa).

Residues 1–7 are Cytoplasmic-facing; the sequence is MKMRRYK. The helical; Signal-anchor for type II membrane protein transmembrane segment at 8–23 threads the bilayer; that stretch reads LFLMFCMAGLCLISFL. At 24 to 538 the chain is on the lumenal side; sequence HFFKTLSYVT…VRGKLDTAEG (515 aa). The interval 120–161 is disordered; it reads PGTRMLEKPSPGRTEEKTEVSEGSSARGPARRPMRHVLSSRE. N-linked (GlcNAc...) asparagine glycans are attached at residues Asn-245, Asn-263, and Asn-401. Residues 507-538 are disordered; that stretch reads REPKSTVEGGRQNQGSDGRSSAVRGKLDTAEG.

Belongs to the glycosyltransferase 17 family. As to quaternary structure, interacts with MGAT4D. As to expression, highly expressed in brain and kidney and to a much lesser extent in stomach, heart, intestine, uterus, testis, ovary and lung. Not present in spleen, liver and muscle. In brain, expressed in neurons of hippocampus.

It is found in the golgi apparatus membrane. It carries out the reaction N(4)-{beta-D-GlcNAc-(1-&gt;2)-alpha-D-Man-(1-&gt;3)-[beta-D-GlcNAc-(1-&gt;2)-alpha-D-Man-(1-&gt;6)]-beta-D-Man-(1-&gt;4)-beta-D-GlcNAc-(1-&gt;4)-beta-D-GlcNAc}-L-asparaginyl-[protein] + UDP-N-acetyl-alpha-D-glucosamine = N(4)-{beta-D-GlcNAc-(1-&gt;2)-alpha-D-Man-(1-&gt;3)-[beta-D-GlcNAc-(1-&gt;4)]-[beta-D-GlcNAc-(1-&gt;2)-alpha-D-Man-(1-&gt;6)]-beta-D-Man-(1-&gt;4)-beta-D-GlcNAc-(1-&gt;4)-beta-D-GlcNAc}-L-asparaginyl-[protein] + UDP + H(+). The protein operates within protein modification; protein glycosylation. Its function is as follows. It is involved in the regulation of the biosynthesis and biological function of glycoprotein oligosaccharides. Catalyzes the addition of N-acetylglucosamine in beta 1-4 linkage to the beta-linked mannose of the trimannosyl core of N-linked sugar chains, called bisecting N-acetylglucosamine (GlcNAc). It is one of the most important enzymes involved in the regulation of the biosynthesis of glycoprotein oligosaccharides. The addition of this bisecting GlcNAc residue alters not only the composition, but also the conformation of the N-glycan. The introduction of the bisecting GlcNAc residue results in the suppression of further processing and elongation of N-glycans, precluding the formation of beta-1,6 GlcNAc branching, catalyzed by MGAT5 since it is unable to use the bisected oligosaccharide as a substrate. Addition of bisecting N-acetylglucosamine to CDH1/E-cadherin modulates CDH1 cell membrane location. Inhibits NeuAc-alpha-2,3-Gal-beta-1,4-GlcNAc- formation which modulates sialylation levels and plays a role in cell migration regulation. In brain, addition of bisecting N-acetylglucosamine to BACE1 blocks its lysosomal targeting in response to oxidative stress and further degradation which increases its location to early endosome and the APP cleavage. The protein is Beta-1,4-mannosyl-glycoprotein 4-beta-N-acetylglucosaminyltransferase of Mus musculus (Mouse).